A 227-amino-acid polypeptide reads, in one-letter code: ATP synthase F(0) complex subunit a (227 aa).

Helical transmembrane passes span 14–34, 69–89, 98–118, 139–159, 174–194, and 196–216; these read LLGIPLILLSLLFPTLLLPSP, WALILTSLMTFLLLINLLGLL, QLSMNMALAFPLWLATLLTGL, IPALILIETTSLLIRPLALGV, LISTATLALLPTMPTISVLTA, and VLLLLTILELAVAMIQAYVFV.

This sequence belongs to the ATPase A chain family. Component of the ATP synthase complex composed at least of ATP5F1A/subunit alpha, ATP5F1B/subunit beta, ATP5MC1/subunit c (homooctomer), MT-ATP6/subunit a, MT-ATP8/subunit 8, ATP5ME/subunit e, ATP5MF/subunit f, ATP5MG/subunit g, ATP5MK/subunit k, ATP5MJ/subunit j, ATP5F1C/subunit gamma, ATP5F1D/subunit delta, ATP5F1E/subunit epsilon, ATP5PF/subunit F6, ATP5PB/subunit b, ATP5PD/subunit d, ATP5PO/subunit OSCP. ATP synthase complex consists of a soluble F(1) head domain (subunits alpha(3) and beta(3)) - the catalytic core - and a membrane F(0) domain - the membrane proton channel (subunits c, a, 8, e, f, g, k and j). These two domains are linked by a central stalk (subunits gamma, delta, and epsilon) rotating inside the F1 region and a stationary peripheral stalk (subunits F6, b, d, and OSCP). Interacts with DNAJC30; interaction is direct.

It localises to the mitochondrion inner membrane. It carries out the reaction H(+)(in) = H(+)(out). Its function is as follows. Subunit a, of the mitochondrial membrane ATP synthase complex (F(1)F(0) ATP synthase or Complex V) that produces ATP from ADP in the presence of a proton gradient across the membrane which is generated by electron transport complexes of the respiratory chain. ATP synthase complex consist of a soluble F(1) head domain - the catalytic core - and a membrane F(1) domain - the membrane proton channel. These two domains are linked by a central stalk rotating inside the F(1) region and a stationary peripheral stalk. During catalysis, ATP synthesis in the catalytic domain of F(1) is coupled via a rotary mechanism of the central stalk subunits to proton translocation. With the subunit c (ATP5MC1), forms the proton-conducting channel in the F(0) domain, that contains two crucial half-channels (inlet and outlet) that facilitate proton movement from the mitochondrial intermembrane space (IMS) into the matrix. Protons are taken up via the inlet half-channel and released through the outlet half-channel, following a Grotthuss mechanism. This chain is ATP synthase F(0) complex subunit a, found in Struthio camelus (Common ostrich).